The following is a 492-amino-acid chain: Ketol-acid reductoisomerase (NADP(+)) (492 aa).

The KARI N-terminal Rossmann domain occupies 14–208 (LDQLGRCRFM…GGHKAGVLES (195 aa)). NADP(+) contacts are provided by residues 45 to 48 (CGAQ), R68, R76, S78, and 108 to 110 (DKQ). H132 is a catalytic residue. G158 serves as a coordination point for NADP(+). KARI C-terminal knotted domains are found at residues 209–344 (SFVA…NAPK) and 345–485 (YDGK…MTDM). Mg(2+) is bound by residues D217, E221, E389, and E393. S414 serves as a coordination point for substrate.

This sequence belongs to the ketol-acid reductoisomerase family. Mg(2+) serves as cofactor.

The catalysed reaction is (2R)-2,3-dihydroxy-3-methylbutanoate + NADP(+) = (2S)-2-acetolactate + NADPH + H(+). The enzyme catalyses (2R,3R)-2,3-dihydroxy-3-methylpentanoate + NADP(+) = (S)-2-ethyl-2-hydroxy-3-oxobutanoate + NADPH + H(+). Its pathway is amino-acid biosynthesis; L-isoleucine biosynthesis; L-isoleucine from 2-oxobutanoate: step 2/4. The protein operates within amino-acid biosynthesis; L-valine biosynthesis; L-valine from pyruvate: step 2/4. Involved in the biosynthesis of branched-chain amino acids (BCAA). Catalyzes an alkyl-migration followed by a ketol-acid reduction of (S)-2-acetolactate (S2AL) to yield (R)-2,3-dihydroxy-isovalerate. In the isomerase reaction, S2AL is rearranged via a Mg-dependent methyl migration to produce 3-hydroxy-3-methyl-2-ketobutyrate (HMKB). In the reductase reaction, this 2-ketoacid undergoes a metal-dependent reduction by NADPH to yield (R)-2,3-dihydroxy-isovalerate. The protein is Ketol-acid reductoisomerase (NADP(+)) of Haemophilus influenzae (strain 86-028NP).